We begin with the raw amino-acid sequence, 159 residues long: Ribosomal RNA large subunit methyltransferase H (159 aa).

S-adenosyl-L-methionine-binding positions include Leu-76, Gly-108, and 127-132 (FGKLTM).

This sequence belongs to the RNA methyltransferase RlmH family. Homodimer.

Its subcellular location is the cytoplasm. The enzyme catalyses pseudouridine(1915) in 23S rRNA + S-adenosyl-L-methionine = N(3)-methylpseudouridine(1915) in 23S rRNA + S-adenosyl-L-homocysteine + H(+). Specifically methylates the pseudouridine at position 1915 (m3Psi1915) in 23S rRNA. The polypeptide is Ribosomal RNA large subunit methyltransferase H (Lacticaseibacillus casei (strain BL23) (Lactobacillus casei)).